Here is a 124-residue protein sequence, read N- to C-terminus: Small ribosomal subunit protein uS13 (124 aa).

Residues 98–124 (VRGQRTKTNARTRKGPKRTIAGKKKAR) form a disordered region.

The protein belongs to the universal ribosomal protein uS13 family. As to quaternary structure, part of the 30S ribosomal subunit. Forms a loose heterodimer with protein S19. Forms two bridges to the 50S subunit in the 70S ribosome.

Its function is as follows. Located at the top of the head of the 30S subunit, it contacts several helices of the 16S rRNA. In the 70S ribosome it contacts the 23S rRNA (bridge B1a) and protein L5 of the 50S subunit (bridge B1b), connecting the 2 subunits; these bridges are implicated in subunit movement. Contacts the tRNAs in the A and P-sites. The chain is Small ribosomal subunit protein uS13 from Mycobacterium leprae (strain Br4923).